Consider the following 140-residue polypeptide: Hemoglobin subunit beta (140 aa).

Positions 1–140 constitute a Globin domain; the sequence is GSDLVSGFWG…VGDALAKAYH (140 aa). Positions 57 and 86 each coordinate heme b.

It belongs to the globin family. Heterotetramer of two alpha chains and two beta chains. Red blood cells.

Its function is as follows. Involved in oxygen transport from the lung to the various peripheral tissues. This is Hemoglobin subunit beta (HBB) from Pelophylax lessonae (Pool frog).